The chain runs to 121 residues: Small ribosomal subunit protein uS13 (121 aa).

Residues 90 to 121 are disordered; the sequence is RHRRGLPTRGQNTKNNARTRKGPTKTVAGKKK. Residues 106-121 are compositionally biased toward basic residues; the sequence is ARTRKGPTKTVAGKKK.

The protein belongs to the universal ribosomal protein uS13 family. Part of the 30S ribosomal subunit. Forms a loose heterodimer with protein S19. Forms two bridges to the 50S subunit in the 70S ribosome.

Its function is as follows. Located at the top of the head of the 30S subunit, it contacts several helices of the 16S rRNA. In the 70S ribosome it contacts the 23S rRNA (bridge B1a) and protein L5 of the 50S subunit (bridge B1b), connecting the 2 subunits; these bridges are implicated in subunit movement. Contacts the tRNAs in the A and P-sites. The polypeptide is Small ribosomal subunit protein uS13 (Enterococcus faecalis (strain ATCC 700802 / V583)).